Reading from the N-terminus, the 629-residue chain is METVSVLLFFFLFLLAAEARSTKRTGCKDFTCGEHDFKFPFFRTDMPSRCGLFKLNCSANIPEIQLEKDGKWYTVKSVSQANTITIIDPRLNQSLTTGGCSDLSSFSLPDSPWLKLNTLYKCNNSSRKNGFSYANCRGEGSSLYYNLGDDHDVSGCSPIKTPESWVTPKNGNLSDVNATFSLHIELPGNCFRCHNNGGECTKVKNNYRCVGANTEPNNYHAEMRLGLGIGGSVILIIILVALFAVIHRNYRRKDGSELSRDNSKSDVEFSQVFFKIPIFSYKELQAATDNFSKDRLLGDGGFGTVYYGKVRDGREVAVKRLYEHNYRRLEQFMNEIEILTRLHHKNLVSLYGCTSRRSRELLLVYEFIPNGTVADHLYGENTPHQGFLTWSMRLSIAIETASALAYLHASDIIHRDVKTTNILLDRNFGVKVADFGLSRLLPSDVTHVSTAPQGTPGYVDPEYHRCYHLTDKSDVYSFGVVLVELISSKPAVDISRCKSEINLSSLAINKIQNHATHELIDQNLGYATNEGVRKMTTMVAELAFQCLQQDNTMRPTMEQVVHELKGIQNEEQKCPTYDYREETIIPHPSPPDWGEAALLKNMKFPRSPVSVTDQWTSKSTTPNTSAYEF.

Positions 1 to 19 (METVSVLLFFFLFLLAAEA) are cleaved as a signal peptide. The Extracellular portion of the chain corresponds to 20–225 (RSTKRTGCKD…PNNYHAEMRL (206 aa)). Residues asparagine 56, asparagine 92, asparagine 123, asparagine 124, asparagine 172, and asparagine 177 are each glycosylated (N-linked (GlcNAc...) asparagine). The chain crosses the membrane as a helical span at residues 226 to 246 (GLGIGGSVILIIILVALFAVI). Residues 247 to 629 (HRNYRRKDGS…TTPNTSAYEF (383 aa)) lie on the Cytoplasmic side of the membrane. Residues 291 to 565 (FSKDRLLGDG…TMEQVVHELK (275 aa)) form the Protein kinase domain. ATP contacts are provided by residues 297–305 (LGDGGFGTV) and lysine 319. Phosphotyrosine is present on tyrosine 365. Aspartate 416 acts as the Proton acceptor in catalysis. Residue serine 449 is modified to Phosphoserine. 2 positions are modified to phosphothreonine: threonine 450 and threonine 455. Tyrosine 463 is subject to Phosphotyrosine. The disordered stretch occupies residues 609–629 (VSVTDQWTSKSTTPNTSAYEF).

Belongs to the protein kinase superfamily. Ser/Thr protein kinase family.

The protein resides in the cell membrane. It carries out the reaction L-seryl-[protein] + ATP = O-phospho-L-seryl-[protein] + ADP + H(+). The enzyme catalyses L-threonyl-[protein] + ATP = O-phospho-L-threonyl-[protein] + ADP + H(+). This chain is LEAF RUST 10 DISEASE-RESISTANCE LOCUS RECEPTOR-LIKE PROTEIN KINASE-like 1.1, found in Arabidopsis thaliana (Mouse-ear cress).